We begin with the raw amino-acid sequence, 192 residues long: UPF0301 protein Bcep18194_A3962 (192 aa).

It belongs to the UPF0301 (AlgH) family.

The chain is UPF0301 protein Bcep18194_A3962 from Burkholderia lata (strain ATCC 17760 / DSM 23089 / LMG 22485 / NCIMB 9086 / R18194 / 383).